Here is a 199-residue protein sequence, read N- to C-terminus: Ribosome maturation factor RimM (199 aa).

A PRC barrel domain is found at 95–168; it reads EDEFYHADLV…FVRVDPVAAG (74 aa). Residues 167–199 form a disordered region; it reads AGLVEDEDGDAPREEDFDPKGRPRGPRDAGGNR. The segment covering 176–193 has biased composition (basic and acidic residues); sequence DAPREEDFDPKGRPRGPR.

It belongs to the RimM family. As to quaternary structure, binds ribosomal protein uS19.

Its subcellular location is the cytoplasm. An accessory protein needed during the final step in the assembly of 30S ribosomal subunit, possibly for assembly of the head region. Essential for efficient processing of 16S rRNA. May be needed both before and after RbfA during the maturation of 16S rRNA. It has affinity for free ribosomal 30S subunits but not for 70S ribosomes. The protein is Ribosome maturation factor RimM of Mesorhizobium japonicum (strain LMG 29417 / CECT 9101 / MAFF 303099) (Mesorhizobium loti (strain MAFF 303099)).